We begin with the raw amino-acid sequence, 417 residues long: UDP-N-acetylglucosamine 1-carboxyvinyltransferase (417 aa).

22 to 23 (KN) is a binding site for phosphoenolpyruvate. Residue arginine 92 coordinates UDP-N-acetyl-alpha-D-glucosamine. Residue cysteine 116 is the Proton donor of the active site. Cysteine 116 bears the 2-(S-cysteinyl)pyruvic acid O-phosphothioketal mark. UDP-N-acetyl-alpha-D-glucosamine is bound by residues aspartate 304 and isoleucine 326.

It belongs to the EPSP synthase family. MurA subfamily.

It is found in the cytoplasm. The enzyme catalyses phosphoenolpyruvate + UDP-N-acetyl-alpha-D-glucosamine = UDP-N-acetyl-3-O-(1-carboxyvinyl)-alpha-D-glucosamine + phosphate. The protein operates within cell wall biogenesis; peptidoglycan biosynthesis. Cell wall formation. Adds enolpyruvyl to UDP-N-acetylglucosamine. In Geobacter metallireducens (strain ATCC 53774 / DSM 7210 / GS-15), this protein is UDP-N-acetylglucosamine 1-carboxyvinyltransferase.